We begin with the raw amino-acid sequence, 124 residues long: Small ribosomal subunit protein bS16 (124 aa).

The segment at Ala80–Glu124 is disordered. The span at Lys99–Glu113 shows a compositional bias: basic and acidic residues. Positions Ala114–Glu124 are enriched in low complexity.

It belongs to the bacterial ribosomal protein bS16 family.

In Rhizobium meliloti (strain 1021) (Ensifer meliloti), this protein is Small ribosomal subunit protein bS16.